Reading from the N-terminus, the 75-residue chain is MEEITFEKAMERLEEIVDLMNQPSTSLDASLKFYEEADALMRICESRIRKAEERVRELSEKRNEDFLSEEESFVH.

The protein belongs to the XseB family. In terms of assembly, heterooligomer composed of large and small subunits.

Its subcellular location is the cytoplasm. It carries out the reaction Exonucleolytic cleavage in either 5'- to 3'- or 3'- to 5'-direction to yield nucleoside 5'-phosphates.. Its function is as follows. Bidirectionally degrades single-stranded DNA into large acid-insoluble oligonucleotides, which are then degraded further into small acid-soluble oligonucleotides. This chain is Exodeoxyribonuclease 7 small subunit, found in Chlamydia abortus (strain DSM 27085 / S26/3) (Chlamydophila abortus).